The sequence spans 78 residues: Large ribosomal subunit protein bL28B (78 aa).

Belongs to the bacterial ribosomal protein bL28 family.

The chain is Large ribosomal subunit protein bL28B (rpmB2) from Streptomyces coelicolor (strain ATCC BAA-471 / A3(2) / M145).